Reading from the N-terminus, the 238-residue chain is tRNA1(Val) (adenine(37)-N6)-methyltransferase (238 aa).

The protein belongs to the methyltransferase superfamily. tRNA (adenine-N(6)-)-methyltransferase family.

Its subcellular location is the cytoplasm. It catalyses the reaction adenosine(37) in tRNA1(Val) + S-adenosyl-L-methionine = N(6)-methyladenosine(37) in tRNA1(Val) + S-adenosyl-L-homocysteine + H(+). In terms of biological role, specifically methylates the adenine in position 37 of tRNA(1)(Val) (anticodon cmo5UAC). The polypeptide is tRNA1(Val) (adenine(37)-N6)-methyltransferase (Shewanella baltica (strain OS185)).